The primary structure comprises 525 residues: Phosphoenolpyruvate carboxykinase (ATP) 1 (525 aa).

Substrate is bound by residues arginine 55, tyrosine 190, and lysine 196. ATP-binding positions include lysine 196, histidine 215, and 231–239 (GLSGTGKTT). Positions 196 and 215 each coordinate Mn(2+). Mn(2+) is bound at residue aspartate 252. Residues glutamate 280, arginine 317, and threonine 442 each coordinate ATP. Arginine 317 contacts substrate.

The protein belongs to the phosphoenolpyruvate carboxykinase (ATP) family. Mn(2+) is required as a cofactor.

The protein localises to the cytoplasm. It carries out the reaction oxaloacetate + ATP = phosphoenolpyruvate + ADP + CO2. It functions in the pathway carbohydrate biosynthesis; gluconeogenesis. Functionally, involved in the gluconeogenesis. Catalyzes the conversion of oxaloacetate (OAA) to phosphoenolpyruvate (PEP) through direct phosphoryl transfer between the nucleoside triphosphate and OAA. This is Phosphoenolpyruvate carboxykinase (ATP) 1 from Moorella thermoacetica (strain ATCC 39073 / JCM 9320).